The chain runs to 64 residues: Small ribosomal subunit protein bS18c (64 aa).

It belongs to the bacterial ribosomal protein bS18 family. As to quaternary structure, part of the 30S ribosomal subunit.

The protein resides in the plastid. Its subcellular location is the chloroplast. In Bigelowiella natans (Pedinomonas minutissima), this protein is Small ribosomal subunit protein bS18c (rps18).